The chain runs to 77 residues: DNA-directed RNA polymerase subunit epsilon (77 aa).

Belongs to the RNA polymerase subunit epsilon family. RNAP is composed of a core of 2 alpha, a beta and a beta' subunit. The core is associated with a delta subunit, and at least one of epsilon or omega. When a sigma factor is associated with the core the holoenzyme is formed, which can initiate transcription.

It catalyses the reaction RNA(n) + a ribonucleoside 5'-triphosphate = RNA(n+1) + diphosphate. In terms of biological role, a non-essential component of RNA polymerase (RNAP). This Lactobacillus delbrueckii subsp. bulgaricus (strain ATCC 11842 / DSM 20081 / BCRC 10696 / JCM 1002 / NBRC 13953 / NCIMB 11778 / NCTC 12712 / WDCM 00102 / Lb 14) protein is DNA-directed RNA polymerase subunit epsilon.